Consider the following 385-residue polypeptide: Bifunctional chorismate mutase/prephenate dehydratase (385 aa).

The 92-residue stretch at 1 to 92 (MPANNSLLIF…ESVATQKKLL (92 aa)) folds into the Chorismate mutase domain. Residues arginine 11, arginine 28, lysine 39, aspartate 48, glutamate 52, serine 84, and glutamine 88 each contribute to the substrate site. The Prephenate dehydratase domain maps to 105 to 285 (NFSFLGPKGS…NITRFILLNR (181 aa)). The interval 286 to 385 (NPKKISKNIP…PSEKITPIAP (100 aa)) is regulatory. The ACT domain occupies 299–376 (TLIFTTGQEA…RFIKILGCYP (78 aa)).

It localises to the cytoplasm. It carries out the reaction chorismate = prephenate. The catalysed reaction is prephenate + H(+) = 3-phenylpyruvate + CO2 + H2O. Its pathway is amino-acid biosynthesis; L-phenylalanine biosynthesis; phenylpyruvate from prephenate: step 1/1. The protein operates within metabolic intermediate biosynthesis; prephenate biosynthesis; prephenate from chorismate: step 1/1. In terms of biological role, catalyzes the Claisen rearrangement of chorismate to prephenate and the decarboxylation/dehydration of prephenate to phenylpyruvate. The polypeptide is Bifunctional chorismate mutase/prephenate dehydratase (pheA) (Buchnera aphidicola subsp. Acyrthosiphon pisum (strain APS) (Acyrthosiphon pisum symbiotic bacterium)).